The chain runs to 139 residues: Arsenate reductase (139 aa).

Catalysis depends on nucleophile residues Cys10, Cys82, and Cys89. 2 disulfide bridges follow: Cys10-Cys82 and Cys82-Cys89.

Belongs to the low molecular weight phosphotyrosine protein phosphatase family. Thioredoxin-coupled ArsC subfamily.

The protein localises to the cytoplasm. It catalyses the reaction arsenate + [thioredoxin]-dithiol + H(+) = arsenite + [thioredoxin]-disulfide + H2O. Catalyzes the reduction of arsenate [As(V)] to arsenite [As(III)]. The sequence is that of Arsenate reductase from Halalkalibacterium halodurans (strain ATCC BAA-125 / DSM 18197 / FERM 7344 / JCM 9153 / C-125) (Bacillus halodurans).